Here is a 313-residue protein sequence, read N- to C-terminus: tRNA-cytidine(32) 2-sulfurtransferase (313 aa).

The short motif at 60 to 65 (SGGKDS) is the PP-loop motif element. [4Fe-4S] cluster-binding residues include cysteine 135, cysteine 138, and cysteine 226.

The protein belongs to the TtcA family. In terms of assembly, homodimer. It depends on Mg(2+) as a cofactor. Requires [4Fe-4S] cluster as cofactor.

It localises to the cytoplasm. It carries out the reaction cytidine(32) in tRNA + S-sulfanyl-L-cysteinyl-[cysteine desulfurase] + AH2 + ATP = 2-thiocytidine(32) in tRNA + L-cysteinyl-[cysteine desulfurase] + A + AMP + diphosphate + H(+). Its pathway is tRNA modification. Its function is as follows. Catalyzes the ATP-dependent 2-thiolation of cytidine in position 32 of tRNA, to form 2-thiocytidine (s(2)C32). The sulfur atoms are provided by the cysteine/cysteine desulfurase (IscS) system. The sequence is that of tRNA-cytidine(32) 2-sulfurtransferase from Delftia acidovorans (strain DSM 14801 / SPH-1).